The following is a 339-amino-acid chain: Undecaprenyl-phosphate 4-deoxy-4-formamido-L-arabinose transferase (339 aa).

2 consecutive transmembrane segments (helical) span residues 235 to 255 (LSLV…FLLV) and 269 to 289 (LFVL…GMGL).

The protein belongs to the glycosyltransferase 2 family.

It localises to the cell inner membrane. The enzyme catalyses UDP-4-deoxy-4-formamido-beta-L-arabinose + di-trans,octa-cis-undecaprenyl phosphate = 4-deoxy-4-formamido-alpha-L-arabinopyranosyl di-trans,octa-cis-undecaprenyl phosphate + UDP. The protein operates within glycolipid biosynthesis; 4-amino-4-deoxy-alpha-L-arabinose undecaprenyl phosphate biosynthesis; 4-amino-4-deoxy-alpha-L-arabinose undecaprenyl phosphate from UDP-4-deoxy-4-formamido-beta-L-arabinose and undecaprenyl phosphate: step 1/2. It functions in the pathway bacterial outer membrane biogenesis; lipopolysaccharide biosynthesis. Catalyzes the transfer of 4-deoxy-4-formamido-L-arabinose from UDP to undecaprenyl phosphate. The modified arabinose is attached to lipid A and is required for resistance to polymyxin and cationic antimicrobial peptides. In Pseudomonas aeruginosa (strain LESB58), this protein is Undecaprenyl-phosphate 4-deoxy-4-formamido-L-arabinose transferase.